The following is a 138-amino-acid chain: Putative pre-16S rRNA nuclease (138 aa).

Belongs to the YqgF nuclease family.

It localises to the cytoplasm. Functionally, could be a nuclease involved in processing of the 5'-end of pre-16S rRNA. In Salmonella dublin (strain CT_02021853), this protein is Putative pre-16S rRNA nuclease.